Consider the following 465-residue polypeptide: Iron-sulfur cluster assembly SufBD family protein SAUSA300_0822 (465 aa).

It belongs to the iron-sulfur cluster assembly SufBD family.

The chain is Iron-sulfur cluster assembly SufBD family protein SAUSA300_0822 from Staphylococcus aureus (strain USA300).